The sequence spans 347 residues: Spermidine/putrescine import ATP-binding protein PotA (347 aa).

In terms of domain architecture, ABC transporter spans 6-238 (LEIKNLSHYY…PKTKFVADFI (233 aa)). An ATP-binding site is contributed by 40-47 (GPSGCGKT).

The protein belongs to the ABC transporter superfamily. Spermidine/putrescine importer (TC 3.A.1.11.1) family. The complex is composed of two ATP-binding proteins (PotA), two transmembrane proteins (PotB and PotC) and a solute-binding protein (PotD).

It is found in the cell inner membrane. The catalysed reaction is ATP + H2O + polyamine-[polyamine-binding protein]Side 1 = ADP + phosphate + polyamineSide 2 + [polyamine-binding protein]Side 1.. In terms of biological role, part of the ABC transporter complex PotABCD involved in spermidine/putrescine import. Responsible for energy coupling to the transport system. The sequence is that of Spermidine/putrescine import ATP-binding protein PotA from Borreliella afzelii (strain PKo) (Borrelia afzelii).